We begin with the raw amino-acid sequence, 597 residues long: 2-isopropylmalate synthase (597 aa).

The unknown stretch occupies residues 1–80; the sequence is MQLDIDRLVA…QKNESLERTE (80 aa). The 263-residue stretch at 87-349 folds into the Pyruvate carboxyltransferase domain; that stretch reads VIIFDTTLRD…ETGIDTTQIV (263 aa). Positions 87-349 are 2-isopropylmalate synthase; the sequence is VIIFDTTLRD…ETGIDTTQIV (263 aa). Mn(2+) is bound by residues Asp-96, His-284, His-286, and Asn-320. Positions 475–597 are regulatory domain; the sequence is KFISQKISTE…KPKAQGSGTI (123 aa).

This sequence belongs to the alpha-IPM synthase/homocitrate synthase family. LeuA type 1 subfamily. As to quaternary structure, homodimer. It depends on Mn(2+) as a cofactor.

It is found in the cytoplasm. The enzyme catalyses 3-methyl-2-oxobutanoate + acetyl-CoA + H2O = (2S)-2-isopropylmalate + CoA + H(+). Its pathway is amino-acid biosynthesis; L-leucine biosynthesis; L-leucine from 3-methyl-2-oxobutanoate: step 1/4. Its function is as follows. Catalyzes the condensation of the acetyl group of acetyl-CoA with 3-methyl-2-oxobutanoate (2-ketoisovalerate) to form 3-carboxy-3-hydroxy-4-methylpentanoate (2-isopropylmalate). This chain is 2-isopropylmalate synthase, found in Neisseria gonorrhoeae (strain ATCC 700825 / FA 1090).